We begin with the raw amino-acid sequence, 310 residues long: HPr kinase/phosphorylase (310 aa).

Active-site residues include His138 and Lys159. Position 153–160 (153–160) interacts with ATP; it reads GKSGVGKS. A Mg(2+)-binding site is contributed by Ser160. Catalysis depends on Asp177, which acts as the Proton acceptor; for phosphorylation activity. Proton donor; for dephosphorylation activity. The important for the catalytic mechanism of both phosphorylation and dephosphorylation stretch occupies residues 201–210; that stretch reads LEIRGLGIIN. A Mg(2+)-binding site is contributed by Glu202. The active site involves Arg243. The tract at residues 264-269 is important for the catalytic mechanism of dephosphorylation; it reads PVRPGR.

It belongs to the HPrK/P family. In terms of assembly, homohexamer. Mg(2+) serves as cofactor.

It carries out the reaction [HPr protein]-L-serine + ATP = [HPr protein]-O-phospho-L-serine + ADP + H(+). It catalyses the reaction [HPr protein]-O-phospho-L-serine + phosphate + H(+) = [HPr protein]-L-serine + diphosphate. In terms of biological role, catalyzes the ATP- as well as the pyrophosphate-dependent phosphorylation of a specific serine residue in HPr, a phosphocarrier protein of the phosphoenolpyruvate-dependent sugar phosphotransferase system (PTS). HprK/P also catalyzes the pyrophosphate-producing, inorganic phosphate-dependent dephosphorylation (phosphorolysis) of seryl-phosphorylated HPr (P-Ser-HPr). The two antagonistic activities of HprK/P are regulated by several intracellular metabolites, which change their concentration in response to the absence or presence of rapidly metabolisable carbon sources (glucose, fructose, etc.) in the growth medium. Also phosphorylates/dephosphorylates the HPr-like catabolite repression protein crh on a specific serine residue. Therefore, by controlling the phosphorylation state of HPr and crh, HPrK/P is a sensor enzyme that plays a major role in the regulation of carbon metabolism and sugar transport: it mediates carbon catabolite repression (CCR), and regulates PTS-catalyzed carbohydrate uptake and inducer exclusion. The sequence is that of HPr kinase/phosphorylase from Bacillus pumilus (strain SAFR-032).